The primary structure comprises 464 residues: Glutamate--tRNA ligase 2 (464 aa).

The short motif at 11-21 is the 'HIGH' region element; that stretch reads PSPTGFLHIGS. The short motif at 240–244 is the 'KMSKS' region element; the sequence is KLSKR. Position 243 (lysine 243) interacts with ATP.

Belongs to the class-I aminoacyl-tRNA synthetase family. Glutamate--tRNA ligase type 1 subfamily. In terms of assembly, monomer.

It is found in the cytoplasm. It carries out the reaction tRNA(Glu) + L-glutamate + ATP = L-glutamyl-tRNA(Glu) + AMP + diphosphate. Functionally, catalyzes the attachment of glutamate to tRNA(Glu) in a two-step reaction: glutamate is first activated by ATP to form Glu-AMP and then transferred to the acceptor end of tRNA(Glu). This is Glutamate--tRNA ligase 2 from Rickettsia bellii (strain OSU 85-389).